Reading from the N-terminus, the 228-residue chain is Superoxide dismutase [Mn], mitochondrial (228 aa).

A mitochondrion-targeting transit peptide spans 1–24 (MALRNLMTKKPFAGILTFRQQLRC). The Mn(2+) site is built by His52, His100, Asp189, and His193.

This sequence belongs to the iron/manganese superoxide dismutase family. As to quaternary structure, homotetramer. The cofactor is Mn(2+).

Its subcellular location is the mitochondrion matrix. The enzyme catalyses 2 superoxide + 2 H(+) = H2O2 + O2. Functionally, destroys superoxide anion radicals which are normally produced within the cells and which are toxic to biological systems. In Capsicum annuum (Capsicum pepper), this protein is Superoxide dismutase [Mn], mitochondrial (SODA).